A 252-amino-acid polypeptide reads, in one-letter code: UPF0246 protein LJ_0535 (252 aa).

This sequence belongs to the UPF0246 family.

The protein is UPF0246 protein LJ_0535 of Lactobacillus johnsonii (strain CNCM I-12250 / La1 / NCC 533).